The chain runs to 403 residues: MGELSMQEMPLPALFEQGSKIHASAESSVDQDTVRKGCEILRQCEEMIGKLGLFSVNETKEDISTANLKYILVPYYLAELTEKVADNDRIKVLKASQAKLKEFISFCETMELVPEEEIETSTQGGANSSVDRRAKKIARFKRQRAAESKLLEIKERKERRGRSTKAAALSSPVETEEDDVLDDDGEEEREAWLTTISLGLCKAFDLLEMLKKEEEILSAVKEKQLQDGEREFSQAILDERTKKVETWHRDAAARAHHTKPAAPITCATFAQDVIEGRAKVSQAHEHKHQPLIFGPASLVGRNPTTEREKIAAQVFQPHYRLPTMSIEEAGLTEMNMMNEWQERNVKLMEEANSSWYKDTPKSRPGEDDEEDDDDAAQDKARAWDDWKDDNPRGAGNKKLTPCG.

Disordered regions lie at residues 158–184 and 351–403; these read ERRGRSTKAAALSSPVETEEDDVLDDD and ANSS…TPCG. Composition is skewed to acidic residues over residues 174-184 and 366-375; these read ETEEDDVLDDD and EDDEEDDDDA. The segment covering 376–391 has biased composition (basic and acidic residues); that stretch reads AQDKARAWDDWKDDNP.

It belongs to the IGBP1/TAP42 family.

In terms of biological role, involved in the regulation of the TOR signaling pathway. Seems to act as a regulator of PP2A catalytic activity. The sequence is that of PP2A regulatory subunit TAP46 from Nicotiana tabacum (Common tobacco).